The primary structure comprises 721 residues: MNSLQSLCVLCSRLSECALELECLRFCDPVTLIPDMTNFRKNGVVIIHLFKTLFAELCHQNFNCASPVTIYLQILLKAMYNQVLLLDASIHQFLLDNDKQKYFENIFQLNECKQHLKLDLALNNYLTFSVDISTINDIEKLLCKMNCIFGLISPLDGINACSQIIEFLTILCGVCVVMKPEVFSETTTCLKCYEELSLVPNQGKSIRKRLAGKFCNHLTETHMVSNLEKNVDIIEKDLDFSTKQYGLVKEYMAKITNIFQQQLYSKPPHLQEAENTLINFDLFSKIPDTIYSLSEFTYWSKISESVIQKASITLNQLNLCHSLYADLQNEISKFLYGETIQDVFNFNEENVTNDDKLYIGSRFISPCRLVDIITNVSIKNLEEDPVFTKLAEEDEIQTKIKTLLNELENSAHETVPKKYVTHSMTQDHNLQQEIHIRKKAYYQKISESGYSKVMLCIKEQEALINKLMNINILGNHIFESLSKMMNAFANRQLQSLENFSADPFTYDDHLYIKNNLLSKKLPQELLPNLSQEMYRLLTGPLSNYHTASFPLSSNISMAYACDVADFLPHMKEDLAKCVEGTIYPENWMLCTYNKFFNFDGLHNINDMQRQMWNFIRELVLSVALYNDVFGKQLSIVKFGEETETVEKILLTFDSGSPLLFKRGTTTTKFNDLYSLLYFDLKTQCDPVQISQTKQVSHIPAPNLLDLCRQNENSIPECFYNF.

The C3H1-type zinc finger occupies 189–217 (CLKCYEELSLVPNQGKSIRKRLAGKFCNH). 625-632 (YNDVFGKQ) lines the ATP pocket.

Belongs to the herpesviridae TRM1 protein family. Associates with TRM2 and TRM3 to form the tripartite terminase complex. Interacts with portal protein.

It localises to the host nucleus. Component of the molecular motor that translocates viral genomic DNA in empty capsid during DNA packaging. Forms a tripartite terminase complex together with TRM2 and TRM3 in the host cytoplasm. Once the complex reaches the host nucleus, it interacts with the capsid portal vertex. This portal forms a ring in which genomic DNA is translocated into the capsid. TRM1 carries an endonuclease activity that plays an important role for the cleavage of concatemeric viral DNA into unit length genomes. The protein is Tripartite terminase subunit 1 of Homo sapiens (Human).